A 422-amino-acid chain; its full sequence is UDP-N-acetylglucosamine 1-carboxyvinyltransferase (422 aa).

22 to 23 (KN) serves as a coordination point for phosphoenolpyruvate. Arg94 provides a ligand contact to UDP-N-acetyl-alpha-D-glucosamine. Residue Cys118 is the Proton donor of the active site. A 2-(S-cysteinyl)pyruvic acid O-phosphothioketal modification is found at Cys118. Residues 123 to 127 (RPVDL), Asp308, and Ile330 each bind UDP-N-acetyl-alpha-D-glucosamine.

Belongs to the EPSP synthase family. MurA subfamily.

The protein localises to the cytoplasm. It carries out the reaction phosphoenolpyruvate + UDP-N-acetyl-alpha-D-glucosamine = UDP-N-acetyl-3-O-(1-carboxyvinyl)-alpha-D-glucosamine + phosphate. It functions in the pathway cell wall biogenesis; peptidoglycan biosynthesis. Functionally, cell wall formation. Adds enolpyruvyl to UDP-N-acetylglucosamine. The sequence is that of UDP-N-acetylglucosamine 1-carboxyvinyltransferase from Dinoroseobacter shibae (strain DSM 16493 / NCIMB 14021 / DFL 12).